The chain runs to 605 residues: Protein DENND6A (605 aa).

Residues 1-20 form a disordered region; it reads MALPGPAVFGPGSRGSLDEA. The region spanning 60–239 is the uDENN domain; the sequence is HCVCVVGFDL…KVRIPTCHDK (180 aa). Ser-124 is modified (phosphoserine). The region spanning 265–390 is the cDENN domain; that stretch reads EVDLFRCFCP…VKVKKLKNLK (126 aa). One can recognise a dDENN domain in the interval 392–525; sequence LDSKPGVYTS…KTRRKEMTQK (134 aa). Lys-507 bears the N6-methyllysine mark.

This sequence belongs to the DENND6 family.

The protein resides in the recycling endosome. The protein localises to the cytoplasm. In terms of biological role, guanine nucleotide exchange factor (GEF) for RAB14. Component of an endocytic recycling pathway that is required for the control of ADAM10 transport, shedding of N-cadherin/CDH2 by ADAM9 or ADAM10 and regulation of cell-cell junctions. Required for RAB14 recruitment to recycling endosomes. In Mus musculus (Mouse), this protein is Protein DENND6A (Dennd6a).